Consider the following 295-residue polypeptide: Giardin subunit alpha-1 (295 aa).

Annexin repeat units follow at residues 2 to 71 (PKVT…MDLF), 73 to 143 (DRHE…MEKW), 153 to 223 (GSPE…AHFA), and 226 to 293 (GMHR…TLWR).

This sequence belongs to the annexin family. Giardin subunit alpha subfamily.

The protein resides in the cytoplasm. It is found in the cytoskeleton. Giardins are involved in parasite attachment to the intestinal mucosa and in the cytoskeletal disassembly and reassembly that marks the transition from infectious trophozoite to transmissible cyst. They may interact with other cytoskeletal proteins such as microtubules in the microribbons or crossbridges, to maintain the integrity of the ventral disk. The sequence is that of Giardin subunit alpha-1 from Giardia intestinalis (Giardia lamblia).